The chain runs to 462 residues: Fumarate hydratase class II (462 aa).

Substrate is bound by residues 97 to 99 (SGT), 127 to 130 (HPND), 137 to 139 (SSN), and Thr185. The active-site Proton donor/acceptor is the His186. Ser316 is an active-site residue. Residues Ser317 and 322–324 (KVN) contribute to the substrate site.

This sequence belongs to the class-II fumarase/aspartase family. Fumarase subfamily. Homotetramer.

It localises to the cytoplasm. It carries out the reaction (S)-malate = fumarate + H2O. It functions in the pathway carbohydrate metabolism; tricarboxylic acid cycle; (S)-malate from fumarate: step 1/1. In terms of biological role, involved in the TCA cycle. Catalyzes the stereospecific interconversion of fumarate to L-malate. This is Fumarate hydratase class II from Bacillus cereus (strain ATCC 14579 / DSM 31 / CCUG 7414 / JCM 2152 / NBRC 15305 / NCIMB 9373 / NCTC 2599 / NRRL B-3711).